The sequence spans 476 residues: Cysteine--tRNA ligase (476 aa).

Cysteine 31 contacts Zn(2+). The 'HIGH' region motif lies at 33-43 (PTVYNYAHIGN). Cysteine 211, histidine 236, and glutamate 240 together coordinate Zn(2+). The 'KMSKS' region motif lies at 269–273 (KMSKS). Lysine 272 provides a ligand contact to ATP.

The protein belongs to the class-I aminoacyl-tRNA synthetase family. In terms of assembly, monomer. Zn(2+) is required as a cofactor.

It is found in the cytoplasm. The catalysed reaction is tRNA(Cys) + L-cysteine + ATP = L-cysteinyl-tRNA(Cys) + AMP + diphosphate. The sequence is that of Cysteine--tRNA ligase from Xanthomonas euvesicatoria pv. vesicatoria (strain 85-10) (Xanthomonas campestris pv. vesicatoria).